Here is a 100-residue protein sequence, read N- to C-terminus: Large ribosomal subunit protein bL21 (100 aa).

Belongs to the bacterial ribosomal protein bL21 family. Part of the 50S ribosomal subunit. Contacts protein L20.

Functionally, this protein binds to 23S rRNA in the presence of protein L20. This is Large ribosomal subunit protein bL21 from Corynebacterium jeikeium (strain K411).